A 256-amino-acid polypeptide reads, in one-letter code: Imidazole glycerol phosphate synthase subunit hisF1 (256 aa).

Active-site residues include Asp-12 and Asp-131.

This sequence belongs to the HisA/HisF family. In terms of assembly, heterodimer of HisH and HisF.

The protein resides in the cytoplasm. It carries out the reaction 5-[(5-phospho-1-deoxy-D-ribulos-1-ylimino)methylamino]-1-(5-phospho-beta-D-ribosyl)imidazole-4-carboxamide + L-glutamine = D-erythro-1-(imidazol-4-yl)glycerol 3-phosphate + 5-amino-1-(5-phospho-beta-D-ribosyl)imidazole-4-carboxamide + L-glutamate + H(+). It participates in amino-acid biosynthesis; L-histidine biosynthesis; L-histidine from 5-phospho-alpha-D-ribose 1-diphosphate: step 5/9. IGPS catalyzes the conversion of PRFAR and glutamine to IGP, AICAR and glutamate. The HisF subunit catalyzes the cyclization activity that produces IGP and AICAR from PRFAR using the ammonia provided by the HisH subunit. In Pseudomonas aeruginosa (strain ATCC 15692 / DSM 22644 / CIP 104116 / JCM 14847 / LMG 12228 / 1C / PRS 101 / PAO1), this protein is Imidazole glycerol phosphate synthase subunit hisF1 (hisF1).